Here is a 331-residue protein sequence, read N- to C-terminus: Methionyl-tRNA formyltransferase (331 aa).

A (6S)-5,6,7,8-tetrahydrofolate-binding site is contributed by 110–113; it reads SLLP. A disordered region spans residues 312–331; the sequence is HAPAERVSAAGSPAGAGGAP.

Belongs to the Fmt family.

It catalyses the reaction L-methionyl-tRNA(fMet) + (6R)-10-formyltetrahydrofolate = N-formyl-L-methionyl-tRNA(fMet) + (6S)-5,6,7,8-tetrahydrofolate + H(+). Its function is as follows. Attaches a formyl group to the free amino group of methionyl-tRNA(fMet). The formyl group appears to play a dual role in the initiator identity of N-formylmethionyl-tRNA by promoting its recognition by IF2 and preventing the misappropriation of this tRNA by the elongation apparatus. The chain is Methionyl-tRNA formyltransferase from Frankia alni (strain DSM 45986 / CECT 9034 / ACN14a).